Reading from the N-terminus, the 508-residue chain is Non-structural protein 1 (508 aa).

Polar residues predominate over residues 424–453; sequence NTESTTTNNAQSPVSDPVNASANVKTSPAG. The tract at residues 424-464 is disordered; sequence NTESTTTNNAQSPVSDPVNASANVKTSPAGTHTDESVMKKE. Residues 455-464 show a composition bias toward basic and acidic residues; it reads HTDESVMKKE.

The chain is Non-structural protein 1 (Segment-5) from Banna virus (BAV).